Reading from the N-terminus, the 177-residue chain is Large ribosomal subunit protein uL6 (177 aa).

It belongs to the universal ribosomal protein uL6 family. In terms of assembly, part of the 50S ribosomal subunit.

This protein binds to the 23S rRNA, and is important in its secondary structure. It is located near the subunit interface in the base of the L7/L12 stalk, and near the tRNA binding site of the peptidyltransferase center. This Brucella canis (strain ATCC 23365 / NCTC 10854 / RM-666) protein is Large ribosomal subunit protein uL6.